The sequence spans 656 residues: Mucin-20 (656 aa).

Positions 1–21 (MGSVWGLAVPLLVFCWKVGVS) are cleaved as a signal peptide. 3 stretches are compositionally biased toward polar residues: residues 85–96 (ATSISSEVNSRD), 114–125 (PAASSLEAQTTS), and 159–170 (TTSPAPSFLDTQ). Disordered stretches follow at residues 85 to 125 (ATSI…QTTS), 159 to 232 (TTSP…TQTI), and 329 to 348 (YLSSESSSSSDSSAGVLSSS). A compositionally biased stretch (low complexity) spans 171–227 (TTSPEPSSLTTSPAPSSLITSPTPSSLTTSPAPSFLDTQTTSPAPSSLTTSPAPSSL). 5 consecutive repeat copies span residues 180 to 188 (TTSPAPSSL), 189 to 197 (ITSPTPSSL), 198 to 206 (TTSPAPSFL), 210 to 218 (TTSPAPSSL), and 219 to 227 (TTSPAPSSL). Residues 180–227 (TTSPAPSSLITSPTPSSLTTSPAPSFLDTQTTSPAPSSLTTSPAPSSL) form an approximate repeats region. 2 N-linked (GlcNAc...) asparagine glycosylation sites follow: Asn366 and Asn570. The interval 399–603 (TAALFTSEIL…WIRKTTKHDP (205 aa)) is involved in oligomerization. Residues 560–573 (STTASTSKNPNITL) show a composition bias toward polar residues. The disordered stretch occupies residues 560 to 592 (STTASTSKNPNITLTKTTASPKPPTHPTTSAST). Positions 604–656 (GEDGGFLLVRLTVASPKDLTEHNAREKLMNQLRRELHARMPLVHMSFLSIRRG) are interaction with MET.

Interacts with MET; oligomerization increases affinity for MET. As to expression, highly expressed in kidney. Up-regulated in renal tissues during renal injury.

The protein resides in the secreted. Its subcellular location is the apical cell membrane. It is found in the basolateral cell membrane. It localises to the cell projection. The protein localises to the microvillus membrane. In terms of biological role, may regulate MET signaling cascade. Seems to decrease hepatocyte growth factor (HGF)-induced transient MAPK activation. Blocks GRB2 recruitment to MET thus suppressing the GRB2-RAS pathway. Inhibits HGF-induced proliferation of MMP1 and MMP9 expression. This Mus musculus (Mouse) protein is Mucin-20 (Muc20).